The sequence spans 470 residues: Neuraminidase (470 aa).

At 1-6 (MNPNQK) the chain is on the intravirion side. Residues 7–27 (IITIGSISIAIGIISLILQIG) traverse the membrane as a helical segment. The interval 11 to 33 (GSISIAIGIISLILQIGNIISIW) is involved in apical transport and lipid raft association. The Virion surface portion of the chain corresponds to 28 to 470 (NIISIWASHS…GAELPFTIDK (443 aa)). The tract at residues 36 to 90 (HSIQTGSQNHTGICNQRIITYENSTWVNQTYVNINNTNVVAGKDKTSMTLAGNSS) is hypervariable stalk region. 5 N-linked (GlcNAc...) asparagine; by host glycosylation sites follow: N44, N58, N63, N70, and N88. The tract at residues 91-470 (LCPIRGWAIY…GAELPFTIDK (380 aa)) is head of neuraminidase. Disulfide bonds link C92-C417, C124-C129, C184-C231, C233-C238, C279-C292, C281-C290, C318-C335, and C421-C447. R118 is a binding site for substrate. N146 carries N-linked (GlcNAc...) asparagine; by host glycosylation. The active-site Proton donor/acceptor is the D151. R152 lines the substrate pocket. N235 carries N-linked (GlcNAc...) asparagine; by host glycosylation. Residue 277-278 (EE) participates in substrate binding. R293 contributes to the substrate binding site. Residues D294, G298, and D324 each coordinate Ca(2+). Substrate is bound at residue R368. Catalysis depends on Y402, which acts as the Nucleophile. Residues N434 and N455 are each glycosylated (N-linked (GlcNAc...) asparagine; by host).

It belongs to the glycosyl hydrolase 34 family. As to quaternary structure, homotetramer. Ca(2+) is required as a cofactor. Post-translationally, N-glycosylated.

Its subcellular location is the virion membrane. It is found in the host apical cell membrane. The catalysed reaction is Hydrolysis of alpha-(2-&gt;3)-, alpha-(2-&gt;6)-, alpha-(2-&gt;8)- glycosidic linkages of terminal sialic acid residues in oligosaccharides, glycoproteins, glycolipids, colominic acid and synthetic substrates.. With respect to regulation, inhibited by the neuraminidase inhibitors zanamivir (Relenza) and oseltamivir (Tamiflu). These drugs interfere with the release of progeny virus from infected cells and are effective against all influenza strains. Resistance to neuraminidase inhibitors is quite rare. In terms of biological role, catalyzes the removal of terminal sialic acid residues from viral and cellular glycoconjugates. Cleaves off the terminal sialic acids on the glycosylated HA during virus budding to facilitate virus release. Additionally helps virus spread through the circulation by further removing sialic acids from the cell surface. These cleavages prevent self-aggregation and ensure the efficient spread of the progeny virus from cell to cell. Otherwise, infection would be limited to one round of replication. Described as a receptor-destroying enzyme because it cleaves a terminal sialic acid from the cellular receptors. May facilitate viral invasion of the upper airways by cleaving the sialic acid moieties on the mucin of the airway epithelial cells. Likely to plays a role in the budding process through its association with lipid rafts during intracellular transport. May additionally display a raft-association independent effect on budding. Plays a role in the determination of host range restriction on replication and virulence. Sialidase activity in late endosome/lysosome traffic seems to enhance virus replication. In Influenza A virus (strain A/USA:Memphis/10/1996 H1N1), this protein is Neuraminidase.